The chain runs to 411 residues: Anaerobic nitric oxide reductase flavorubredoxin homolog (411 aa).

Residues leucine 30 to isoleucine 210 are zinc metallo-hydrolase. Fe cation is bound by residues histidine 79, glutamate 81, aspartate 83, histidine 147, aspartate 166, histidine 227, cysteine 360, cysteine 363, cysteine 393, and cysteine 396. One can recognise a Rubredoxin-like domain in the interval glycine 355–leucine 406.

This sequence in the N-terminal section; belongs to the zinc metallo-hydrolase group 3 family. As to quaternary structure, homotetramer. Fe cation is required as a cofactor.

It localises to the cytoplasm. It participates in nitrogen metabolism; nitric oxide reduction. Anaerobic nitric oxide reductase; uses NADH to detoxify nitric oxide (NO), protecting several 4Fe-4S NO-sensitive enzymes. Has at least 2 reductase partners, only one of which (NorW, flavorubredoxin reductase) has been identified. NO probably binds to the di-iron center. Also able to function as an aerobic oxygen reductase. This is Anaerobic nitric oxide reductase flavorubredoxin homolog from Escherichia coli O157:H7.